The primary structure comprises 322 residues: Cytochrome f (322 aa).

The signal sequence occupies residues 1 to 36; the sequence is MQKNRNTFSWVKEQMTRCISVSMMIYVITRASISNA. 4 residues coordinate heme: Tyr37, Cys57, Cys60, and His61. Residues 288–308 traverse the membrane as a helical segment; it reads IQGLLFFLASVILAQIFLVLK.

The protein belongs to the cytochrome f family. In terms of assembly, the 4 large subunits of the cytochrome b6-f complex are cytochrome b6, subunit IV (17 kDa polypeptide, petD), cytochrome f and the Rieske protein, while the 4 small subunits are PetG, PetL, PetM and PetN. The complex functions as a dimer. Heme is required as a cofactor.

It is found in the plastid. It localises to the chloroplast thylakoid membrane. Functionally, component of the cytochrome b6-f complex, which mediates electron transfer between photosystem II (PSII) and photosystem I (PSI), cyclic electron flow around PSI, and state transitions. This is Cytochrome f from Nymphaea alba (White water-lily).